Reading from the N-terminus, the 370-residue chain is Glutamate 5-kinase (370 aa).

Residue K13 participates in ATP binding. Substrate-binding residues include S54, D140, and N152. ATP contacts are provided by residues 172-173 and 214-220; these read SD and SGGMVTK. The 78-residue stretch at 278–355 folds into the PUA domain; it reads TGTLVLDAGA…GEIEAILGFR (78 aa).

Belongs to the glutamate 5-kinase family.

The protein resides in the cytoplasm. The catalysed reaction is L-glutamate + ATP = L-glutamyl 5-phosphate + ADP. The protein operates within amino-acid biosynthesis; L-proline biosynthesis; L-glutamate 5-semialdehyde from L-glutamate: step 1/2. Catalyzes the transfer of a phosphate group to glutamate to form L-glutamate 5-phosphate. This Paramagnetospirillum magneticum (strain ATCC 700264 / AMB-1) (Magnetospirillum magneticum) protein is Glutamate 5-kinase.